Consider the following 627-residue polypeptide: Glyco-Gag protein (627 aa).

The Cytoplasmic portion of the chain corresponds to 1–63 (LGDVPRTSGA…FLLSVWNRSR (63 aa)). Residues 64–86 (AARLVCCSIVLCCLCLTVFLYLS) form a helical membrane-spanning segment. The Extracellular portion of the chain corresponds to 87-627 (ENMGQTVTTP…PQASLLTLDD (541 aa)). Residue asparagine 113 is glycosylated (N-linked (GlcNAc...) asparagine; by host). The segment covering 199 to 215 (PPSAPSLPPEPPFPTPP) has biased composition (pro residues). 2 disordered regions span residues 199–310 (PPSA…RQGG) and 523–627 (RETP…TLDD). 2 stretches are compositionally biased toward basic and acidic residues: residues 523 to 555 (RETP…EKER) and 575 to 608 (RQDR…DCPK). The CCHC-type zinc-finger motif lies at 593–608 (CAYCKEKGHWARDCPK).

Glycosylated by host. Post-translationally, cleaved by host near the middle of the molecule, releasing the c-terminal half containing capsid and nucleoprotein domains op GAG.

The protein resides in the host cell membrane. In terms of biological role, plays a role in viral particle release. Presumably acts by facilitating the fission of the virion bud at the cell surface. May prevent the antiviral activity of murine APOBEC3. This Friend murine leukemia virus (isolate 57) (FrMLV) protein is Glyco-Gag protein.